Reading from the N-terminus, the 45-residue chain is Large ribosomal subunit protein bL34 (45 aa).

The interval 1–45 is disordered; sequence MTKRTFGGTSRKRKRVSGFRVRMRSHTGRRVIRTRRKRGRSRLAA. Residues 10–45 are compositionally biased toward basic residues; sequence SRKRKRVSGFRVRMRSHTGRRVIRTRRKRGRSRLAA.

The protein belongs to the bacterial ribosomal protein bL34 family.

The sequence is that of Large ribosomal subunit protein bL34 from Synechococcus sp. (strain CC9311).